Consider the following 204-residue polypeptide: Ribonuclease HII (204 aa).

The 190-residue stretch at 8-197 (RLICGVDEAG…VRELLQNPPL (190 aa)) folds into the RNase H type-2 domain. D14, E15, and D106 together coordinate a divalent metal cation.

This sequence belongs to the RNase HII family. The cofactor is Mn(2+). Mg(2+) serves as cofactor.

Its subcellular location is the cytoplasm. It catalyses the reaction Endonucleolytic cleavage to 5'-phosphomonoester.. Functionally, endonuclease that specifically degrades the RNA of RNA-DNA hybrids. This chain is Ribonuclease HII, found in Azoarcus sp. (strain BH72).